The chain runs to 759 residues: Subtilisin-like protease SBT3.10 (759 aa).

Positions 1–25 are cleaved as a signal peptide; it reads MSKTIILLAFFLSIVLNVQISFVVA. Positions 26 to 108 are cleaved as a propeptide — activation peptide; it reads ESKVYVVYLG…VIPNTLYEMT (83 aa). In terms of domain architecture, Inhibitor I9 spans 29-106; that stretch reads VYVVYLGEKE…VQVIPNTLYE (78 aa). Residues 112–606 enclose the Peptidase S8 domain; that stretch reads TWDYLGVSPG…GGLINPEKAV (495 aa). D142 acts as the Charge relay system in catalysis. N-linked (GlcNAc...) asparagine glycans are attached at residues N175 and N202. The active-site Charge relay system is H218. N233 and N361 each carry an N-linked (GlcNAc...) asparagine glycan. Residues 390 to 464 form the PA domain; sequence DCEKLSANPK…ELGTDILFYI (75 aa). S537 functions as the Charge relay system in the catalytic mechanism.

Belongs to the peptidase S8 family.

It localises to the secreted. This is Subtilisin-like protease SBT3.10 from Arabidopsis thaliana (Mouse-ear cress).